The chain runs to 110 residues: Large ribosomal subunit protein uL22 (110 aa).

This sequence belongs to the universal ribosomal protein uL22 family. As to quaternary structure, part of the 50S ribosomal subunit.

This protein binds specifically to 23S rRNA; its binding is stimulated by other ribosomal proteins, e.g. L4, L17, and L20. It is important during the early stages of 50S assembly. It makes multiple contacts with different domains of the 23S rRNA in the assembled 50S subunit and ribosome. In terms of biological role, the globular domain of the protein is located near the polypeptide exit tunnel on the outside of the subunit, while an extended beta-hairpin is found that lines the wall of the exit tunnel in the center of the 70S ribosome. In Chromohalobacter salexigens (strain ATCC BAA-138 / DSM 3043 / CIP 106854 / NCIMB 13768 / 1H11), this protein is Large ribosomal subunit protein uL22.